A 762-amino-acid chain; its full sequence is MGRIGKKAMAIALVSAVMVTPLNVCATVENQEQQQVTQGAEDIAVIDDAQETVAADEAQADEAAAITVEGRETAEESSASIPEGILMEKNNVDIAEGQGYSLDQEAGAKYVKAMTQGTIILSYKSTSENGIQSLFSVGNSTAGNQDRHFHIYITNSGGIGIELRNTDGVFNYTLDRPASVRALYKGERVFNTVALKADAANKQCRLFANGELLATLDKDAFKFISDITGVDNVTLGGTKRQGKIAYPFGGTIGDIKVYSNALSDEELIQATGVTTYGENIFYAGDVTESNYFRIPSLLTLSTGTVISAADARYGGTHDSKSKINIAFAKSTDGGNTWSEPTLPLKFDDYIAKNIDWPRDSVGKNVQIQGSASYIDPVLLEDKLTKRIFLFADLMPAGIGSSNASVGSGFKEVNGKKYLKLRWHKDAGRAYDYTIREKGVIYNDATNQPTEFRVDGEYNLYQHDTNLTCKQYDYNFSGNNLIESKTDVDVNMNIFYKNSVFKAFPTNYLAMRYSDDEGASWSDLDIVSSFKPEVSKFLVVGPGIGKQISTGENAGRLLVPLYSKSSAELGFMYSDDHGDNWTYVEADNLTGGATAEAQIVEMPDGSLKTYLRTGSNCIAEVTSIDGGETWSDRVPLQGISTTSYGTQLSVINYSQPIDGKPAIILSSPNATNGRKNGKIWIGLVNDTGNTGIDKYSVEWKYSYAVDTPQMGYSYSCLAELPDGQVGLLYEKYDSWSRNELHLKDILKFEKYSISELTGQASGN.

Positions 1–27 are cleaved as a signal peptide; it reads MGRIGKKAMAIALVSAVMVTPLNVCAT. Position 293 (Arg293) interacts with substrate. Asp318 functions as the Proton acceptor in the catalytic mechanism. 3 BNR repeats span residues 328 to 339, 511 to 522, and 571 to 582; these read AKSTDGGNTWSE, RYSDDEGASWSD, and MYSDDHGDNWTY. The active site involves Glu595. Arg611 serves as a coordination point for substrate. A BNR 4 repeat occupies 620–631; it reads VTSIDGGETWSD. Arg673 lines the substrate pocket. Catalysis depends on Tyr713, which acts as the Nucleophile.

The protein belongs to the glycosyl hydrolase 33 family.

The protein localises to the secreted. It is found in the extracellular space. The catalysed reaction is Elimination of alpha-sialyl groups in N-acetylneuraminic acid glycosides, releasing 2,7-anhydro-alpha-N-acetylneuraminate.. The chain is Anhydrosialidase from Macrobdella decora (North American leech).